Here is a 359-residue protein sequence, read N- to C-terminus: Heat-inducible transcription repressor HrcA (359 aa).

The protein belongs to the HrcA family.

Negative regulator of class I heat shock genes (grpE-dnaK-dnaJ and groELS operons). Prevents heat-shock induction of these operons. In Sinorhizobium medicae (strain WSM419) (Ensifer medicae), this protein is Heat-inducible transcription repressor HrcA.